The following is a 401-amino-acid chain: G2/mitotic-specific cyclin-B1 (401 aa).

2 disordered regions span residues 1 to 30 (MALR…PTLK) and 84 to 103 (KVQV…ETSG). Positions 9 to 26 (RLASTRAEQGGKTCSVSG) are enriched in polar residues.

It belongs to the cyclin family. Cyclin AB subfamily. In terms of assembly, interacts with the CDK1 protein kinase to form a serine/threonine kinase holoenzyme complex also known as maturation promoting factor (MPF). The cyclin subunit imparts substrate specificity to the complex.

Functionally, essential for the control of the cell cycle at the G2/M (mitosis) transition. This is G2/mitotic-specific cyclin-B1 (ccnb1) from Oryzias javanicus (Javanese ricefish).